A 140-amino-acid chain; its full sequence is 3-hydroxyacyl-[acyl-carrier-protein] dehydratase FabZ (140 aa).

The active site involves His-48.

The protein belongs to the thioester dehydratase family. FabZ subfamily.

The protein resides in the cytoplasm. The enzyme catalyses a (3R)-hydroxyacyl-[ACP] = a (2E)-enoyl-[ACP] + H2O. In terms of biological role, involved in unsaturated fatty acids biosynthesis. Catalyzes the dehydration of short chain beta-hydroxyacyl-ACPs and long chain saturated and unsaturated beta-hydroxyacyl-ACPs. The sequence is that of 3-hydroxyacyl-[acyl-carrier-protein] dehydratase FabZ from Exiguobacterium sibiricum (strain DSM 17290 / CCUG 55495 / CIP 109462 / JCM 13490 / 255-15).